A 1383-amino-acid polypeptide reads, in one-letter code: DNA-directed RNA polymerase subunit beta'' (1383 aa).

4 residues coordinate Zn(2+): Cys-220, Cys-289, Cys-296, and Cys-299.

This sequence belongs to the RNA polymerase beta' chain family. RpoC2 subfamily. As to quaternary structure, in plastids the minimal PEP RNA polymerase catalytic core is composed of four subunits: alpha, beta, beta', and beta''. When a (nuclear-encoded) sigma factor is associated with the core the holoenzyme is formed, which can initiate transcription. The cofactor is Zn(2+).

The protein resides in the plastid. Its subcellular location is the chloroplast. The catalysed reaction is RNA(n) + a ribonucleoside 5'-triphosphate = RNA(n+1) + diphosphate. In terms of biological role, DNA-dependent RNA polymerase catalyzes the transcription of DNA into RNA using the four ribonucleoside triphosphates as substrates. This chain is DNA-directed RNA polymerase subunit beta'', found in Oenothera elata subsp. hookeri (Hooker's evening primrose).